Here is a 222-residue protein sequence, read N- to C-terminus: Coiled-coil domain-containing protein 43 homolog (222 aa).

The stretch at 80–111 (ETENKLKLTNLKLEQELKIKETTQSEINEEEK) forms a coiled coil. Disordered regions lie at residues 102–126 (TQSE…EQKK) and 159–222 (EDNK…KRRL). Composition is skewed to basic and acidic residues over residues 112–126 (YENP…EQKK) and 175–212 (RIAD…EEKK). A coiled-coil region spans residues 168–222 (GENLNAKRIADEEKAKREKSKIEHQKKVQRDKEALEKQKRDEEKKKTVKKEKRRL). Over residues 213-222 (KTVKKEKRRL) the composition is skewed to basic residues.

Belongs to the CCDC43 family.

This Dictyostelium discoideum (Social amoeba) protein is Coiled-coil domain-containing protein 43 homolog.